We begin with the raw amino-acid sequence, 435 residues long: Serine--tRNA ligase (435 aa).

Positions Met-48–Ser-68 are disordered. Over residues Lys-49–Ser-68 the composition is skewed to basic and acidic residues. L-serine is bound at residue Thr-230 to Glu-232. An ATP-binding site is contributed by Arg-261 to Glu-263. An L-serine-binding site is contributed by Glu-284. Glu-348–Ser-351 contacts ATP. Ser-383 is a binding site for L-serine.

This sequence belongs to the class-II aminoacyl-tRNA synthetase family. Type-1 seryl-tRNA synthetase subfamily. In terms of assembly, homodimer. The tRNA molecule binds across the dimer.

It is found in the cytoplasm. It carries out the reaction tRNA(Ser) + L-serine + ATP = L-seryl-tRNA(Ser) + AMP + diphosphate + H(+). The enzyme catalyses tRNA(Sec) + L-serine + ATP = L-seryl-tRNA(Sec) + AMP + diphosphate + H(+). It participates in aminoacyl-tRNA biosynthesis; selenocysteinyl-tRNA(Sec) biosynthesis; L-seryl-tRNA(Sec) from L-serine and tRNA(Sec): step 1/1. Functionally, catalyzes the attachment of serine to tRNA(Ser). Is also able to aminoacylate tRNA(Sec) with serine, to form the misacylated tRNA L-seryl-tRNA(Sec), which will be further converted into selenocysteinyl-tRNA(Sec). This chain is Serine--tRNA ligase, found in Limosilactobacillus reuteri (strain DSM 20016) (Lactobacillus reuteri).